We begin with the raw amino-acid sequence, 310 residues long: tRNA-splicing endonuclease subunit Sen34 (310 aa).

Residues 119-177 (GQAAKKQKLEQASGASSSQEAGSSQAAKEDETSDGQASGEQEEAGPSSSQAGPSNGVAP) are disordered. The span at 128-144 (EQASGASSSQEAGSSQA) shows a compositional bias: low complexity. Residues Tyr247, His255, and Lys286 contribute to the active site.

It belongs to the tRNA-intron endonuclease family. As to quaternary structure, tRNA splicing endonuclease is a heterotetramer composed of TSEN2, TSEN15, TSEN34/LENG5 and TSEN54. tRNA splicing endonuclease complex also contains proteins of the pre-mRNA 3'-end processing machinery such as CLP1, CPSF1, CPSF4 and CSTF2.

It is found in the nucleus. It localises to the nucleolus. It carries out the reaction pretRNA = a 3'-half-tRNA molecule with a 5'-OH end + a 5'-half-tRNA molecule with a 2',3'-cyclic phosphate end + an intron with a 2',3'-cyclic phosphate and a 5'-hydroxyl terminus.. Constitutes one of the two catalytic subunit of the tRNA-splicing endonuclease complex, a complex responsible for identification and cleavage of the splice sites in pre-tRNA. It cleaves pre-tRNA at the 5'- and 3'-splice sites to release the intron. The products are an intron and two tRNA half-molecules bearing 2',3'-cyclic phosphate and 5'-OH termini. There are no conserved sequences at the splice sites, but the intron is invariably located at the same site in the gene, placing the splice sites an invariant distance from the constant structural features of the tRNA body. It probably carries the active site for 3'-splice site cleavage. The tRNA splicing endonuclease is also involved in mRNA processing via its association with pre-mRNA 3'-end processing factors, establishing a link between pre-tRNA splicing and pre-mRNA 3'-end formation, suggesting that the endonuclease subunits function in multiple RNA-processing events. This Homo sapiens (Human) protein is tRNA-splicing endonuclease subunit Sen34 (TSEN34).